A 150-amino-acid polypeptide reads, in one-letter code: Putative pre-16S rRNA nuclease (150 aa).

It belongs to the YqgF nuclease family.

Its subcellular location is the cytoplasm. Functionally, could be a nuclease involved in processing of the 5'-end of pre-16S rRNA. This Protochlamydia amoebophila (strain UWE25) protein is Putative pre-16S rRNA nuclease.